Reading from the N-terminus, the 811-residue chain is Protein VAC14 homolog (811 aa).

HEAT repeat units lie at residues 81-119, 122-160, 240-278, 334-372, 375-412, 431-469, and 472-510; these read DSYM…VAKG, FRYF…IVMQ, ISYL…EIQK, QIDY…IAPK, LLQI…LVSK, SVDF…RTGG, and INMH…SHKS. Residues 775 to 785 are compositionally biased toward low complexity; the sequence is TSASGITTTAS. A disordered region spans residues 775-811; the sequence is TSASGITTTASNSRDSFITRLPPTAALSTGARKKPKQ.

The protein belongs to the VAC14 family. In terms of assembly, component of the PI(3,5)P2 regulatory complex, composed of ATG18, FIG4, FAB1, VAC14 and VAC7. VAC14 nucleates the assembly of the complex and serves as a scaffold.

It is found in the cytoplasm. The protein resides in the vacuole membrane. The PI(3,5)P2 regulatory complex regulates both the synthesis and turnover of phosphatidylinositol 3,5-bisphosphate (PtdIns(3,5)P2). Regulates the synthesis of PtdIns(3,5)P2 by positive activation of FAB1 and by controlling FIG4 localization. This is Protein VAC14 homolog from Schizosaccharomyces pombe (strain 972 / ATCC 24843) (Fission yeast).